We begin with the raw amino-acid sequence, 402 residues long: LIM/homeobox protein Lhx5 (402 aa).

LIM zinc-binding domains are found at residues 3-61 (VHCA…RRFG) and 62-125 (TKCA…SSSL). Low complexity predominate over residues 124 to 148 (SLKEGSLNSVSSCTDRSLSPDLQDP). Disordered stretches follow at residues 124-186 (SLKE…PRTT) and 298-402 (HGPP…AAVW). Basic and acidic residues predominate over residues 151–167 (DDPKETDNSTSSDKETA). Residues 180 to 239 (RRGPRTTIKAKQLETLKAAFAATPKPTRHIREQLAQETGLNMRVIQVWFQNRRSKERRMK) constitute a DNA-binding region (homeobox). Composition is skewed to low complexity over residues 300–311 (PPSQAQSPADSS) and 322–336 (PLGA…PHGA).

It is found in the nucleus. In terms of biological role, plays an essential role in the regulation of neuronal differentiation and migration during development of the central nervous system. The polypeptide is LIM/homeobox protein Lhx5 (Lhx5) (Mus musculus (Mouse)).